A 420-amino-acid chain; its full sequence is Gamma-glutamyl phosphate reductase (420 aa).

Belongs to the gamma-glutamyl phosphate reductase family.

It localises to the cytoplasm. The enzyme catalyses L-glutamate 5-semialdehyde + phosphate + NADP(+) = L-glutamyl 5-phosphate + NADPH + H(+). Its pathway is amino-acid biosynthesis; L-proline biosynthesis; L-glutamate 5-semialdehyde from L-glutamate: step 2/2. In terms of biological role, catalyzes the NADPH-dependent reduction of L-glutamate 5-phosphate into L-glutamate 5-semialdehyde and phosphate. The product spontaneously undergoes cyclization to form 1-pyrroline-5-carboxylate. The polypeptide is Gamma-glutamyl phosphate reductase (Pasteurella multocida (strain Pm70)).